The following is a 415-amino-acid chain: Gamma-glutamyl phosphate reductase (415 aa).

This sequence belongs to the gamma-glutamyl phosphate reductase family.

It localises to the cytoplasm. It carries out the reaction L-glutamate 5-semialdehyde + phosphate + NADP(+) = L-glutamyl 5-phosphate + NADPH + H(+). It participates in amino-acid biosynthesis; L-proline biosynthesis; L-glutamate 5-semialdehyde from L-glutamate: step 2/2. Functionally, catalyzes the NADPH-dependent reduction of L-glutamate 5-phosphate into L-glutamate 5-semialdehyde and phosphate. The product spontaneously undergoes cyclization to form 1-pyrroline-5-carboxylate. In Xylella fastidiosa (strain 9a5c), this protein is Gamma-glutamyl phosphate reductase.